Consider the following 314-residue polypeptide: 2,3-dihydroxyphenylpropionate/2,3-dihydroxicinnamic acid 1,2-dioxygenase (314 aa).

The active-site Proton donor is His115. His179 serves as the catalytic Proton acceptor.

It belongs to the LigB/MhpB extradiol dioxygenase family. In terms of assembly, homotetramer. The cofactor is Fe(2+).

The enzyme catalyses 3-(2,3-dihydroxyphenyl)propanoate + O2 = (2Z,4E)-2-hydroxy-6-oxonona-2,4-dienedioate + H(+). The catalysed reaction is (2E)-3-(2,3-dihydroxyphenyl)prop-2-enoate + O2 = (2Z,4E,7E)-2-hydroxy-6-oxonona-2,4,7-trienedioate + H(+). It functions in the pathway aromatic compound metabolism; 3-phenylpropanoate degradation. Catalyzes the non-heme iron(II)-dependent oxidative cleavage of 2,3-dihydroxyphenylpropionic acid and 2,3-dihydroxicinnamic acid into 2-hydroxy-6-ketononadienedioate and 2-hydroxy-6-ketononatrienedioate, respectively. This is 2,3-dihydroxyphenylpropionate/2,3-dihydroxicinnamic acid 1,2-dioxygenase from Escherichia coli (strain 55989 / EAEC).